The chain runs to 194 residues: Large ribosomal subunit protein bL9 (194 aa).

The segment covering 166–184 (AENQAQADEQAGELAAAAA) has biased composition (low complexity). The segment at 166 to 194 (AENQAQADEQAGELAAAAAERGDMGGDEE) is disordered. The span at 185–194 (ERGDMGGDEE) shows a compositional bias: basic and acidic residues.

The protein belongs to the bacterial ribosomal protein bL9 family.

Binds to the 23S rRNA. This Hyphomonas neptunium (strain ATCC 15444) protein is Large ribosomal subunit protein bL9.